Reading from the N-terminus, the 92-residue chain is Small ribosomal subunit protein uS19 (92 aa).

The protein belongs to the universal ribosomal protein uS19 family.

Protein S19 forms a complex with S13 that binds strongly to the 16S ribosomal RNA. The chain is Small ribosomal subunit protein uS19 from Rippkaea orientalis (strain PCC 8801 / RF-1) (Cyanothece sp. (strain PCC 8801)).